Reading from the N-terminus, the 248-residue chain is DNA repair protein RecO (248 aa).

The protein belongs to the RecO family.

Involved in DNA repair and RecF pathway recombination. This chain is DNA repair protein RecO, found in Bartonella tribocorum (strain CIP 105476 / IBS 506).